The primary structure comprises 471 residues: MTDLPDSTRWQLWIVAFGFFMQSLDTTIVNTALPSMAQSLGESPLHMHMVIVSYVLTVAVMLPASGWLADKVGVRNIFFTAIVLFTLGSLFCALSGTLNELLLARALQGVGGAMMVPVGRLTVMKIVPREQYMAAMTFVTLPGQVGPLLGPALGGLLVEYASWHWIFLINIPVGIIGAIATLLLMPNYTMQTRRFDLSGFLLLAVGMAVLTLALDGSKGTGLSPLTIAGLVAVGVVALVLYLLHARNNNRALFSLKLFRTRTFSLGLAGSFAGRIGSGMLPFMTPVFLQIGLGFSPFHAGLMMIPMVLGSMGMKRIVVQVVNRFGYRRVLVATTLGLSLVTLLFMTTALLGWYYVLPFVLFLQGMVNSTRFSSMNTLTLKDLPDNLASSGNSLLSMIMQLSMSIGVTIAGLLLGLFGSQHVSVDSGTTQTVFMYTWLSMALIIALPAFIFARVPNDTHQNVAISRRKRSAQ.

Residues 1–11 (MTDLPDSTRWQ) lie on the Periplasmic side of the membrane. The helical transmembrane segment at 12–32 (LWIVAFGFFMQSLDTTIVNTA) threads the bilayer. Over 33–48 (LPSMAQSLGESPLHMH) the chain is Cytoplasmic. A helical transmembrane segment spans residues 49–69 (MVIVSYVLTVAVMLPASGWLA). The Periplasmic segment spans residues 70-76 (DKVGVRN). Residues 77-97 (IFFTAIVLFTLGSLFCALSGT) traverse the membrane as a helical segment. The Cytoplasmic portion of the chain corresponds to 98–101 (LNEL). A helical transmembrane segment spans residues 102–124 (LLARALQGVGGAMMVPVGRLTVM). Residues 125–137 (KIVPREQYMAAMT) are Periplasmic-facing. A helical transmembrane segment spans residues 138 to 158 (FVTLPGQVGPLLGPALGGLLV). The Cytoplasmic portion of the chain corresponds to 159–164 (EYASWH). A helical membrane pass occupies residues 165–185 (WIFLINIPVGIIGAIATLLLM). Over 186 to 196 (PNYTMQTRRFD) the chain is Periplasmic. Residues 197–217 (LSGFLLLAVGMAVLTLALDGS) traverse the membrane as a helical segment. Residues 218-224 (KGTGLSP) are Cytoplasmic-facing. Residues 225 to 245 (LTIAGLVAVGVVALVLYLLHA) traverse the membrane as a helical segment. Residues 246-262 (RNNNRALFSLKLFRTRT) lie on the Periplasmic side of the membrane. A helical transmembrane segment spans residues 263 to 283 (FSLGLAGSFAGRIGSGMLPFM). The Cytoplasmic portion of the chain corresponds to 284–285 (TP). The helical transmembrane segment at 286-306 (VFLQIGLGFSPFHAGLMMIPM) threads the bilayer. At 307 to 341 (VLGSMGMKRIVVQVVNRFGYRRVLVATTLGLSLVT) the chain is on the periplasmic side. The helical transmembrane segment at 342–362 (LLFMTTALLGWYYVLPFVLFL) threads the bilayer. Topologically, residues 363-395 (QGMVNSTRFSSMNTLTLKDLPDNLASSGNSLLS) are cytoplasmic. The helical transmembrane segment at 396–416 (MIMQLSMSIGVTIAGLLLGLF) threads the bilayer. The Periplasmic segment spans residues 417–430 (GSQHVSVDSGTTQT). A helical membrane pass occupies residues 431–451 (VFMYTWLSMALIIALPAFIFA). Over 452–471 (RVPNDTHQNVAISRRKRSAQ) the chain is Cytoplasmic.

It belongs to the major facilitator superfamily. TCR/Tet family.

The protein localises to the cell inner membrane. This Escherichia coli (strain K12 / MC4100 / BW2952) protein is Putative multidrug resistance protein MdtD.